We begin with the raw amino-acid sequence, 154 residues long: MGLSDGEWQLVLNIWGKVEADIPSHGQEVLISLFKGHPETLEKFDKFKHLKSEDEMKASEELKKHGVTVLTALGGILKKKGQHEAELKPLAQSHATKHKIPVKYLEFISDAIIHALQKKHPGDFGADAQGAMKKALELFRNDMAAKYKELGFQG.

Residues 2–148 (GLSDGEWQLV…FRNDMAAKYK (147 aa)) form the Globin domain. Serine 4 bears the Phosphoserine mark. A nitrite-binding site is contributed by histidine 65. Histidine 65 is an O2 binding site. Threonine 68 bears the Phosphothreonine mark. Histidine 94 serves as a coordination point for heme b.

It belongs to the globin family. In terms of assembly, monomeric.

The protein resides in the cytoplasm. Its subcellular location is the sarcoplasm. The enzyme catalyses Fe(III)-heme b-[protein] + nitric oxide + H2O = Fe(II)-heme b-[protein] + nitrite + 2 H(+). It catalyses the reaction H2O2 + AH2 = A + 2 H2O. Its function is as follows. Monomeric heme protein which primary function is to store oxygen and facilitate its diffusion within muscle tissues. Reversibly binds oxygen through a pentacoordinated heme iron and enables its timely and efficient release as needed during periods of heightened demand. Depending on the oxidative conditions of tissues and cells, and in addition to its ability to bind oxygen, it also has a nitrite reductase activity whereby it regulates the production of bioactive nitric oxide. Under stress conditions, like hypoxia and anoxia, it also protects cells against reactive oxygen species thanks to its pseudoperoxidase activity. This Lagothrix lagotricha (Brown woolly monkey) protein is Myoglobin (MB).